Consider the following 397-residue polypeptide: Phosphoglycerate kinase (397 aa).

Substrate-binding positions include 26–28, R42, 65–68, R119, and R152; these read DLN and HLGR. ATP is bound by residues K203, E325, and 351-354; that span reads GGDT.

It belongs to the phosphoglycerate kinase family. Monomer.

The protein localises to the cytoplasm. It carries out the reaction (2R)-3-phosphoglycerate + ATP = (2R)-3-phospho-glyceroyl phosphate + ADP. It functions in the pathway carbohydrate degradation; glycolysis; pyruvate from D-glyceraldehyde 3-phosphate: step 2/5. The polypeptide is Phosphoglycerate kinase (Bordetella pertussis (strain Tohama I / ATCC BAA-589 / NCTC 13251)).